Here is a 271-residue protein sequence, read N- to C-terminus: Octanoyltransferase LipM (271 aa).

One can recognise a BPL/LPL catalytic domain in the interval 31–242 (GHNKPTLRFY…GLAEQFNVEF (212 aa)). Cysteine 144 serves as the catalytic Acyl-thioester intermediate.

It belongs to the octanoyltransferase LipM family. As to quaternary structure, monomer.

The enzyme catalyses octanoyl-[ACP] + L-lysyl-[protein] = N(6)-octanoyl-L-lysyl-[protein] + holo-[ACP] + H(+). It participates in protein modification; protein lipoylation via endogenous pathway; protein N(6)-(lipoyl)lysine from octanoyl-[acyl-carrier-protein]. Its function is as follows. Catalyzes the transfer of endogenously produced octanoic acid from octanoyl-acyl-carrier-protein onto the lipoyl domain of GcvH, an intermediate carrier during protein lipoylation. In Clostridioides difficile (strain 630) (Peptoclostridium difficile), this protein is Octanoyltransferase LipM.